Consider the following 122-residue polypeptide: Small ribosomal subunit protein uS13 (122 aa).

The segment at 99-122 (RGQRTHTNARTRKGPAKAIAGKKK) is disordered.

This sequence belongs to the universal ribosomal protein uS13 family. Part of the 30S ribosomal subunit. Forms a loose heterodimer with protein S19. Forms two bridges to the 50S subunit in the 70S ribosome.

Functionally, located at the top of the head of the 30S subunit, it contacts several helices of the 16S rRNA. In the 70S ribosome it contacts the 23S rRNA (bridge B1a) and protein L5 of the 50S subunit (bridge B1b), connecting the 2 subunits; these bridges are implicated in subunit movement. Contacts the tRNAs in the A and P-sites. This chain is Small ribosomal subunit protein uS13, found in Rhizobium etli (strain ATCC 51251 / DSM 11541 / JCM 21823 / NBRC 15573 / CFN 42).